A 264-amino-acid polypeptide reads, in one-letter code: Phosphonates import ATP-binding protein PhnC (264 aa).

The 248-residue stretch at 7–254 (LSIRAASKTF…KLIDIYGPEF (248 aa)) folds into the ABC transporter domain. Position 39 to 46 (39 to 46 (GPSGSGKS)) interacts with ATP.

It belongs to the ABC transporter superfamily. Phosphonates importer (TC 3.A.1.9.1) family. As to quaternary structure, the complex is composed of two ATP-binding proteins (PhnC), two transmembrane proteins (PhnE) and a solute-binding protein (PhnD).

It localises to the cell inner membrane. It catalyses the reaction phosphonate(out) + ATP + H2O = phosphonate(in) + ADP + phosphate + H(+). Part of the ABC transporter complex PhnCDE involved in phosphonates import. Responsible for energy coupling to the transport system. This chain is Phosphonates import ATP-binding protein PhnC, found in Caulobacter vibrioides (strain ATCC 19089 / CIP 103742 / CB 15) (Caulobacter crescentus).